Consider the following 126-residue polypeptide: Protein ApaG (126 aa).

The ApaG domain occupies 2–126 (SALDTSIRVE…FRLATPGLLH (125 aa)).

This chain is Protein ApaG, found in Shewanella sp. (strain W3-18-1).